Consider the following 199-residue polypeptide: Large ribosomal subunit protein bL25 (199 aa).

It belongs to the bacterial ribosomal protein bL25 family. CTC subfamily. Part of the 50S ribosomal subunit; part of the 5S rRNA/L5/L18/L25 subcomplex. Contacts the 5S rRNA. Binds to the 5S rRNA independently of L5 and L18.

In terms of biological role, this is one of the proteins that binds to the 5S RNA in the ribosome where it forms part of the central protuberance. In Pseudomonas fluorescens (strain ATCC BAA-477 / NRRL B-23932 / Pf-5), this protein is Large ribosomal subunit protein bL25.